The sequence spans 34 residues: uncharacterized protein (34 aa).

A helical transmembrane segment spans residues 10 to 30 (LIITSSFFAIAVVLVLSVLLI).

It is found in the membrane. This is an uncharacterized protein from Escherichia coli O157:H7.